Consider the following 242-residue polypeptide: uncharacterized protein (242 aa).

This is an uncharacterized protein from Bacillus subtilis (strain 168).